A 553-amino-acid polypeptide reads, in one-letter code: Putative transport protein YidE (553 aa).

Transmembrane regions (helical) follow at residues 4–24, 28–48, 65–85, 95–115, and 158–178; these read IALTVSVLALVAVVGLWIGNI, GVGFGIGGVLFGGIIVGHFVD, FGLILFVYTIGIQVGPGFFAS, LFAVLIVIMGGLVTAILHKIF, and MSYAMAYPFGICGILLTMWLM. 2 RCK C-terminal domains span residues 192-276 and 279-361; these read KHES…VIGK and DTSL…VVGN. 6 helical membrane-spanning segments follow: residues 371–391, 393–413, 437–457, 464–484, 493–513, and 533–553; these read MLPVFIGIGLGVLLGSIPLFV, GFPVALKLGLAGGPLIMALIL, LGIVLFLAVVGLKSGGDFVDT, LSWIGYGIFITAIPLITIGLL, YLTLCGMLAGSMTDPPALAFA, and LVMFLRIITPQLLAVIFWGMG.

It belongs to the AAE transporter (TC 2.A.81) family. YidE subfamily.

The protein localises to the cell membrane. In Salmonella paratyphi C (strain RKS4594), this protein is Putative transport protein YidE.